Consider the following 876-residue polypeptide: Phosphoenolpyruvate carboxylase (876 aa).

Catalysis depends on residues His-138 and Lys-543.

This sequence belongs to the PEPCase type 1 family. Mg(2+) serves as cofactor.

The enzyme catalyses oxaloacetate + phosphate = phosphoenolpyruvate + hydrogencarbonate. Forms oxaloacetate, a four-carbon dicarboxylic acid source for the tricarboxylic acid cycle. The chain is Phosphoenolpyruvate carboxylase from Vibrio atlanticus (strain LGP32) (Vibrio splendidus (strain Mel32)).